Here is a 318-residue protein sequence, read N- to C-terminus: Fe(3+) dicitrate transport system permease protein FecD (318 aa).

The Cytoplasmic segment spans residues 1–2 (MK). A helical membrane pass occupies residues 3–23 (IALVIFITLALAGCALLSLHM). The Periplasmic portion of the chain corresponds to 24 to 55 (GVIPVPWRALLTDWQAGHEHYYVLMEYRLPRL). A helical transmembrane segment spans residues 56–76 (LLALFVGAALAVAGVLIQGIV). Residues 77–105 (RNPLASPDILGVNHAASLASVGALLLMPS) lie on the Cytoplasmic side of the membrane. The helical transmembrane segment at 106–126 (LPVMVLPLLAFAGGMAGLILL) threads the bilayer. Residues 127–137 (KMLAKTHQPMK) lie on the Periplasmic side of the membrane. A helical transmembrane segment spans residues 138–158 (LALTGVALSACWASLTDYLML). The Cytoplasmic segment spans residues 159–179 (SRPQDVNNALLWLTGSLWGRD). A helical transmembrane segment spans residues 180–200 (WSFVKIAIPLMILFLPLSLSF). Topologically, residues 201–225 (CRDLDLLALGDARATTLGVSVPHTR) are periplasmic. The helical transmembrane segment at 226 to 246 (FWALLLAVAMTSTGVAACGPI) threads the bilayer. Over 247 to 269 (SFIGLVVPHMMRSITGGRHRRLL) the chain is Cytoplasmic. A helical transmembrane segment spans residues 270–290 (PVSALTGALLLVVADLLARII). Over 291 to 294 (HPPL) the chain is Periplasmic. The helical transmembrane segment at 295-315 (ELPVGVLTAIIGAPWFVWLLV) threads the bilayer. Topologically, residues 316-318 (RMR) are cytoplasmic.

This sequence belongs to the binding-protein-dependent transport system permease family. FecCD subfamily. As to quaternary structure, the complex is composed of two ATP-binding proteins (FecE), two transmembrane proteins (FecC and FecD) and a solute-binding protein (FecB). Interacts with FecB.

It is found in the cell inner membrane. Its function is as follows. Part of the ABC transporter complex FecBCDE involved in citrate-dependent Fe(3+) uptake. Probably responsible for the translocation of the substrate across the membrane. The protein is Fe(3+) dicitrate transport system permease protein FecD of Escherichia coli (strain K12).